Reading from the N-terminus, the 179-residue chain is Large ribosomal subunit protein uL5 (179 aa).

The protein belongs to the universal ribosomal protein uL5 family. Part of the 50S ribosomal subunit; part of the 5S rRNA/L5/L18/L25 subcomplex. Contacts the 5S rRNA and the P site tRNA. Forms a bridge to the 30S subunit in the 70S ribosome.

In terms of biological role, this is one of the proteins that bind and probably mediate the attachment of the 5S RNA into the large ribosomal subunit, where it forms part of the central protuberance. In the 70S ribosome it contacts protein S13 of the 30S subunit (bridge B1b), connecting the 2 subunits; this bridge is implicated in subunit movement. Contacts the P site tRNA; the 5S rRNA and some of its associated proteins might help stabilize positioning of ribosome-bound tRNAs. This chain is Large ribosomal subunit protein uL5, found in Pasteurella multocida (strain Pm70).